The primary structure comprises 634 residues: uncharacterized protein (634 aa).

The N-terminal stretch at 1-40 (MWLQQRLKGLPGLLSSSWARRLLCLLGLLLLLLWFGGSGA) is a signal peptide. Residues 41–589 (RRAAGGLHLL…DEHMAQQDPG (549 aa)) are Extracellular-facing. N-linked (GlcNAc...) asparagine glycosylation is present at asparagine 363. Residues 590–610 (LPFLFWFSVASLITLFHLFLF) traverse the membrane as a helical segment. The Cytoplasmic segment spans residues 611-634 (KLIYNEYCGPGAKPLFRSKEDPSV).

The protein resides in the membrane. This is an uncharacterized protein from Homo sapiens (Human).